Consider the following 259-residue polypeptide: Thiazole synthase (259 aa).

Lys-98 acts as the Schiff-base intermediate with DXP in catalysis. 1-deoxy-D-xylulose 5-phosphate is bound by residues Gly-159, 185–186 (AG), and 207–208 (NS).

It belongs to the ThiG family. Homotetramer. Forms heterodimers with either ThiH or ThiS.

The protein localises to the cytoplasm. The catalysed reaction is [ThiS sulfur-carrier protein]-C-terminal-Gly-aminoethanethioate + 2-iminoacetate + 1-deoxy-D-xylulose 5-phosphate = [ThiS sulfur-carrier protein]-C-terminal Gly-Gly + 2-[(2R,5Z)-2-carboxy-4-methylthiazol-5(2H)-ylidene]ethyl phosphate + 2 H2O + H(+). The protein operates within cofactor biosynthesis; thiamine diphosphate biosynthesis. Its function is as follows. Catalyzes the rearrangement of 1-deoxy-D-xylulose 5-phosphate (DXP) to produce the thiazole phosphate moiety of thiamine. Sulfur is provided by the thiocarboxylate moiety of the carrier protein ThiS. In vitro, sulfur can be provided by H(2)S. In Chlorobium phaeobacteroides (strain BS1), this protein is Thiazole synthase.